The chain runs to 32 residues: Cytochrome b6-f complex subunit 7 (32 aa).

A helical transmembrane segment spans residues 5–25 (IFGTAAIFWVLIPIGLVGGAL).

It belongs to the PetM family. As to quaternary structure, the 4 large subunits of the cytochrome b6-f complex are cytochrome b6, subunit IV (17 kDa polypeptide, PetD), cytochrome f and the Rieske protein, while the 4 small subunits are PetG, PetL, PetM and PetN. The complex functions as a dimer.

It is found in the cellular thylakoid membrane. Functionally, component of the cytochrome b6-f complex, which mediates electron transfer between photosystem II (PSII) and photosystem I (PSI), cyclic electron flow around PSI, and state transitions. The sequence is that of Cytochrome b6-f complex subunit 7 from Synechococcus sp. (strain CC9902).